A 359-amino-acid polypeptide reads, in one-letter code: Membrane-bound lytic murein transglycosylase C (359 aa).

Residues 1-16 (MKKYLALALIAPLLIS) form the signal peptide. Residue Cys17 is the site of N-palmitoyl cysteine attachment. A lipid anchor (S-diacylglycerol cysteine) is attached at Cys17.

Belongs to the transglycosylase Slt family.

The protein resides in the cell outer membrane. It catalyses the reaction Exolytic cleavage of the (1-&gt;4)-beta-glycosidic linkage between N-acetylmuramic acid (MurNAc) and N-acetylglucosamine (GlcNAc) residues in peptidoglycan, from either the reducing or the non-reducing ends of the peptidoglycan chains, with concomitant formation of a 1,6-anhydrobond in the MurNAc residue.. Its function is as follows. Murein-degrading enzyme. May play a role in recycling of muropeptides during cell elongation and/or cell division. The protein is Membrane-bound lytic murein transglycosylase C of Shigella sonnei (strain Ss046).